Reading from the N-terminus, the 89-residue chain is Small ribosomal subunit protein uS14 (89 aa).

This sequence belongs to the universal ribosomal protein uS14 family. As to quaternary structure, part of the 30S ribosomal subunit. Contacts proteins S3 and S10.

Its function is as follows. Binds 16S rRNA, required for the assembly of 30S particles and may also be responsible for determining the conformation of the 16S rRNA at the A site. The protein is Small ribosomal subunit protein uS14 of Porphyromonas gingivalis (strain ATCC 33277 / DSM 20709 / CIP 103683 / JCM 12257 / NCTC 11834 / 2561).